A 643-amino-acid chain; its full sequence is Phosphomethylpyrimidine synthase (643 aa).

Substrate contacts are provided by residues asparagine 221, methionine 250, tyrosine 279, histidine 315, 335–337, 376–379, and glutamate 415; these read SRG and DGLR. Histidine 419 lines the Zn(2+) pocket. Residue tyrosine 442 coordinates substrate. A Zn(2+)-binding site is contributed by histidine 483. Cysteine 563, cysteine 566, and cysteine 571 together coordinate [4Fe-4S] cluster.

It belongs to the ThiC family. In terms of assembly, homodimer. It depends on [4Fe-4S] cluster as a cofactor.

The catalysed reaction is 5-amino-1-(5-phospho-beta-D-ribosyl)imidazole + S-adenosyl-L-methionine = 4-amino-2-methyl-5-(phosphooxymethyl)pyrimidine + CO + 5'-deoxyadenosine + formate + L-methionine + 3 H(+). It participates in cofactor biosynthesis; thiamine diphosphate biosynthesis. Catalyzes the synthesis of the hydroxymethylpyrimidine phosphate (HMP-P) moiety of thiamine from aminoimidazole ribotide (AIR) in a radical S-adenosyl-L-methionine (SAM)-dependent reaction. This Nitrobacter hamburgensis (strain DSM 10229 / NCIMB 13809 / X14) protein is Phosphomethylpyrimidine synthase.